Here is a 425-residue protein sequence, read N- to C-terminus: 2-methylserine hydroxymethyltransferase (425 aa).

(6S)-5,6,7,8-tetrahydrofolate-binding positions include leucine 126 and 130–132 (GHL). Lysine 235 is subject to N6-(pyridoxal phosphate)lysine.

Belongs to the SHMT family. As to quaternary structure, homodimer. The cofactor is pyridoxal 5'-phosphate.

The protein resides in the cytoplasm. It catalyses the reaction (6R)-5,10-methylene-5,6,7,8-tetrahydrofolate + D-alanine + H2O = 2-methylserine + (6S)-5,6,7,8-tetrahydrofolate. The protein operates within one-carbon metabolism; tetrahydrofolate interconversion. Its function is as follows. Catalyzes the reversible interconversion of alpha-methyl-L-serine to D-alanine with tetrahydrofolate (THF) serving as the one-carbon carrier. Cannot use alpha-methyl-D-serine, L-serine, D-serine or L-alanine. The polypeptide is 2-methylserine hydroxymethyltransferase (Aminobacter sp).